The following is a 433-amino-acid chain: MSLKIKFLLLLVLYHHVDSASIVKFLPGFEGPLPFELETGYIGIGEDENVQFFYYFIKSENNPKEDPLLIWLNGGPGCSCLGGIIFENGPVGLKFEVFNGSAPSLFSTTYSWTKMANIIFLDQPVGSGFSYSKTPIDKTGDISEVKRTHEFLQKWLSRHPQYFSNPLYVVGDSYSGMIVPALVQEISQGNYICCEPPINLQGYMLGNPVTYMDFEQNFRIPYAYGMGLISDEIYEPMKRICNGNYYNVDPSNTQCLKLTEEYHKCTAKINIHHILTPDCDVTNVTSPDCYYYPYHLIECWANDESVREALHIEKGSKGKWARCNRTIPYNHDIVSSIPYHMNNSISGYRSLIYSGDHDIAVPFLATQAWIRSLNYSPIHNWRPWMINNQIAGYTRAYSNKMTFATIKGGGHTAEYRPNETFIMFQRWISGQPL.

An N-terminal signal peptide occupies residues 1–19 (MSLKIKFLLLLVLYHHVDS). 3 cysteine pairs are disulfide-bonded: C78-C323, C241-C255, and C279-C289. A glycan (N-linked (GlcNAc...) asparagine) is linked at N99. S173 is a catalytic residue. Residues N283, N324, and N342 are each glycosylated (N-linked (GlcNAc...) asparagine). Residues D358 and H411 contribute to the active site. Residue N418 is glycosylated (N-linked (GlcNAc...) asparagine).

This sequence belongs to the peptidase S10 family. In terms of processing, N-glycosylated. Highly expressed in seedlings. Expressed in leaves, stems, flowers and siliques, and at low levels in roots.

Its subcellular location is the vacuole. The catalysed reaction is 1-O-(trans-sinapoyl)-beta-D-glucose + (S)-malate = sinapoyl (S)-malate + D-glucose. It carries out the reaction 2 1-O-(trans-sinapoyl)-beta-D-glucose = 1,2-di-O-sinapoyl beta-D-glucose + D-glucose. With respect to regulation, 95% inhibition by diisopropyl fluorophosphate (DFP) and 30% by phenylmethylsulfonyl fluoride (PMSF). Functionally, involved in plants secondary metabolism. Functions as acyltransferase to form the sinapate ester sinapoylmalate. Also capable of catalyzing the formation of 1,2-bis-O-sinapoyl beta-D-glucoside. This is Serine carboxypeptidase-like 8 from Arabidopsis thaliana (Mouse-ear cress).